The following is a 290-amino-acid chain: Undecaprenyl-diphosphatase (290 aa).

8 helical membrane-spanning segments follow: residues 1–21, 48–68, 101–121, 125–145, 161–181, 202–222, 231–251, and 266–286; these read MFLLELIKGIILGIVEGLTEF, SAFTFKVVIQLGSVFAAAWVF, IHVLVGMVPAGILGFLFDDLI, LFSVPTVLIGLFIGAIYMIIA, INYFQAFVIGISQAIAMWPGF, SDFTFIMSVPIMLAASGLSLL, AHIPFYILGFLAAFIVGLIAI, and FAIYRIVLVIFIAILYFGFGI.

The protein belongs to the UppP family.

It is found in the cell membrane. The enzyme catalyses di-trans,octa-cis-undecaprenyl diphosphate + H2O = di-trans,octa-cis-undecaprenyl phosphate + phosphate + H(+). Its function is as follows. Catalyzes the dephosphorylation of undecaprenyl diphosphate (UPP). Confers resistance to bacitracin. This chain is Undecaprenyl-diphosphatase, found in Staphylococcus epidermidis (strain ATCC 35984 / DSM 28319 / BCRC 17069 / CCUG 31568 / BM 3577 / RP62A).